We begin with the raw amino-acid sequence, 180 residues long: Cell division protein SepF (180 aa).

Residues 14–81 (NSEDDEEFDN…SKITPISKSS (68 aa)) are disordered. Acidic residues predominate over residues 15-35 (SEDDEEFDNEDYYLDDEEEEE). Positions 57 to 68 (TRRDTTPKEKPV) are enriched in basic and acidic residues. Low complexity predominate over residues 69–79 (KTTSKITPISK).

Belongs to the SepF family. In terms of assembly, homodimer. Interacts with FtsZ.

It localises to the cytoplasm. Its function is as follows. Cell division protein that is part of the divisome complex and is recruited early to the Z-ring. Probably stimulates Z-ring formation, perhaps through the cross-linking of FtsZ protofilaments. Its function overlaps with FtsA. This is Cell division protein SepF from Agathobacter rectalis (strain ATCC 33656 / DSM 3377 / JCM 17463 / KCTC 5835 / VPI 0990) (Eubacterium rectale).